A 356-amino-acid polypeptide reads, in one-letter code: Thrombopoietin (356 aa).

The first 21 residues, 1–21 (MELTDLLLAAMLLAVARLTLS), serve as a signal peptide directing secretion. Intrachain disulfides connect cysteine 28-cysteine 172 and cysteine 50-cysteine 106. 7 N-linked (GlcNAc...) asparagine glycosylation sites follow: asparagine 197, asparagine 206, asparagine 235, asparagine 249, asparagine 256, asparagine 336, and asparagine 351. Positions 291–356 (GGLPPSPSLA…PHPRNLSQET (66 aa)) are disordered. Residues 330-339 (PSTTMPNSTA) are compositionally biased toward polar residues.

The protein belongs to the EPO/TPO family. Found mainly in the liver, kidney and skeletal muscle.

Its subcellular location is the secreted. In terms of biological role, lineage-specific cytokine affecting the proliferation and maturation of megakaryocytes from their committed progenitor cells. It acts at a late stage of megakaryocyte development. It may be the major physiological regulator of circulating platelets. In Mus musculus (Mouse), this protein is Thrombopoietin (Thpo).